A 376-amino-acid polypeptide reads, in one-letter code: Methionine import ATP-binding protein MetN 1 (376 aa).

Residues 34–273 enclose the ABC transporter domain; it reads VRFINLGKTY…PQHEVSKTLL (240 aa). 70 to 77 serves as a coordination point for ATP; it reads GRSGAGKS.

It belongs to the ABC transporter superfamily. Methionine importer (TC 3.A.1.24) family. As to quaternary structure, the complex is composed of two ATP-binding proteins (MetN), two transmembrane proteins (MetI) and a solute-binding protein (MetQ).

Its subcellular location is the cell inner membrane. It catalyses the reaction L-methionine(out) + ATP + H2O = L-methionine(in) + ADP + phosphate + H(+). It carries out the reaction D-methionine(out) + ATP + H2O = D-methionine(in) + ADP + phosphate + H(+). Part of the ABC transporter complex MetNIQ involved in methionine import. Responsible for energy coupling to the transport system. This Pseudomonas syringae pv. tomato (strain ATCC BAA-871 / DC3000) protein is Methionine import ATP-binding protein MetN 1.